Reading from the N-terminus, the 223-residue chain is Putative 3-methyladenine DNA glycosylase (223 aa).

Belongs to the DNA glycosylase MPG family.

The sequence is that of Putative 3-methyladenine DNA glycosylase from Pseudomonas syringae pv. tomato (strain ATCC BAA-871 / DC3000).